Reading from the N-terminus, the 691-residue chain is Histone-lysine N-methyltransferase Set8 (691 aa).

5 disordered regions span residues 1 to 22, 211 to 234, 345 to 381, 422 to 450, and 484 to 516; these read MIMV…AAAA, RSGL…SATT, PAAG…GDGG, SRRR…QPTN, and APAK…ATNG. Positions 220–232 are enriched in low complexity; sequence SSHSSSSSGGASA. Positions 431 to 446 are enriched in pro residues; sequence PQAPYQPQQPQPPPGT. The segment covering 484 to 503 has biased composition (low complexity); sequence APAKPRAALTKGSKTKTGSK. The SET domain maps to 555 to 676; the sequence is EGLQVRNFMG…PGEELTYDYG (122 aa). Residues 565–567, Tyr610, and 637–638 each bind S-adenosyl-L-methionine; these read KGR and NH.

This sequence belongs to the class V-like SAM-binding methyltransferase superfamily. Histone-lysine methyltransferase family. PR/SET subfamily.

The protein localises to the nucleus. Its subcellular location is the chromosome. It carries out the reaction L-lysyl(20)-[histone H4] + S-adenosyl-L-methionine = N(6)-methyl-L-lysyl(20)-[histone H4] + S-adenosyl-L-homocysteine + H(+). Histone methyltransferase that specifically monomethylates 'Lys-20' of histone H4. H4 'Lys-20' monomethylation is enriched during mitosis and represents a specific tag for epigenetic transcriptional repression. Mainly functions in euchromatin regions, thereby playing a central role in the silencing of euchromatic genes. Required for cell proliferation, possibly by contributing to the maintenance of proper higher-order structure of DNA and chromosome condensation during mitosis. The polypeptide is Histone-lysine N-methyltransferase Set8 (Drosophila pseudoobscura pseudoobscura (Fruit fly)).